The chain runs to 263 residues: Glutamate racemase (263 aa).

Residues 13–14 and 45–46 each bind substrate; these read DS and YG. Catalysis depends on Cys77, which acts as the Proton donor/acceptor. Substrate is bound at residue 78–79; sequence NT. Cys185 functions as the Proton donor/acceptor in the catalytic mechanism. Residue 186–187 coordinates substrate; it reads TH.

It belongs to the aspartate/glutamate racemases family.

The catalysed reaction is L-glutamate = D-glutamate. It participates in cell wall biogenesis; peptidoglycan biosynthesis. Functionally, provides the (R)-glutamate required for cell wall biosynthesis. This chain is Glutamate racemase, found in Vibrio vulnificus (strain CMCP6).